The primary structure comprises 255 residues: Serine/threonine-protein phosphatase PP1 (255 aa).

4 residues coordinate Mn(2+): Asp2, His4, Asp30, and Asn62. His63 (proton donor) is an active-site residue. His111 and His186 together coordinate Mn(2+).

It belongs to the PPP phosphatase family. PP-1 subfamily. It depends on Mn(2+) as a cofactor.

It carries out the reaction O-phospho-L-seryl-[protein] + H2O = L-seryl-[protein] + phosphate. The catalysed reaction is O-phospho-L-threonyl-[protein] + H2O = L-threonyl-[protein] + phosphate. The sequence is that of Serine/threonine-protein phosphatase PP1 from Brassica napus (Rape).